Reading from the N-terminus, the 355-residue chain is C-C chemokine receptor type 8 (355 aa).

The Extracellular segment spans residues 1–35; the sequence is MDYTLDLSVTTVTDYYYPDIFSSPCDAELIQTNGK. A helical membrane pass occupies residues 36–63; it reads LLLAVFYCLLFVFSLLGNSLVILVLVVC. The Cytoplasmic segment spans residues 64–73; the sequence is KKLRSITDVY. Residues 74–93 traverse the membrane as a helical segment; sequence LLNLALSDLLFVFSFPFQTY. Topologically, residues 94-107 are extracellular; it reads YLLDQWVFGTVMCK. C106 and C183 are disulfide-bonded. Residues 108–129 traverse the membrane as a helical segment; that stretch reads VVSGFYYIGFYSSMFFITLMSV. Residues 130–146 are Cytoplasmic-facing; sequence DRYLAVVHAVYALKVRT. Residues 147–171 form a helical membrane-spanning segment; the sequence is IRMGTTLCLAVWLTAIMATIPLLVF. Topologically, residues 172 to 202 are extracellular; the sequence is YQVASEDGVLQCYSFYNQQTLKWKIFTNFKM. Residues 203 to 222 form a helical membrane-spanning segment; sequence NILGLLIPFTIFMFCYIKIL. Over 223–238 the chain is Cytoplasmic; sequence HQLKRCQNHNKTKAIR. A helical membrane pass occupies residues 239–263; that stretch reads LVLIVVIASLLFWVPFNVVLFLTSL. At 264–280 the chain is on the extracellular side; sequence HSMHILDGCSISQQLTY. A helical transmembrane segment spans residues 281–304; sequence ATHVTEIISFTHCCVNPVIYAFVG. The Cytoplasmic segment spans residues 305 to 355; sequence EKFKKHLSEIFQKSCSQIFNYLGRQMPRESCEKSSSCQQHSSRSSSVDYIL.

This sequence belongs to the G-protein coupled receptor 1 family.

It localises to the cell membrane. Functionally, receptor for the chemokine CCL1/SCYA1/I-309. May regulate monocyte chemotaxis and thymic cell line apoptosis. Alternative coreceptor with CD4 for HIV-1 infection. The chain is C-C chemokine receptor type 8 (CCR8) from Homo sapiens (Human).